The primary structure comprises 425 residues: Histidine--tRNA ligase (425 aa).

This sequence belongs to the class-II aminoacyl-tRNA synthetase family. In terms of assembly, homodimer.

The protein resides in the cytoplasm. The enzyme catalyses tRNA(His) + L-histidine + ATP = L-histidyl-tRNA(His) + AMP + diphosphate + H(+). In Shewanella oneidensis (strain ATCC 700550 / JCM 31522 / CIP 106686 / LMG 19005 / NCIMB 14063 / MR-1), this protein is Histidine--tRNA ligase.